Reading from the N-terminus, the 205-residue chain is Anaerobic dimethyl sulfoxide reductase chain B (205 aa).

4Fe-4S ferredoxin-type domains are found at residues 4 to 32, 57 to 89, and 90 to 119; these read YGFY…LGTE, NIFA…KNAD, and GFVI…YDAQ. 16 residues coordinate [4Fe-4S] cluster: cysteine 13, cysteine 16, cysteine 19, cysteine 23, cysteine 67, cysteine 70, cysteine 75, cysteine 79, cysteine 99, cysteine 102, cysteine 105, cysteine 109, cysteine 126, cysteine 129, cysteine 141, and cysteine 145.

As to quaternary structure, heterotrimeric enzyme composed of a catalytic heterodimer (DmsAB) and a membrane anchor protein (DmsC). [4Fe-4S] cluster is required as a cofactor.

Electron transfer subunit of the terminal reductase during anaerobic growth on various sulfoxide and N-oxide compounds. This chain is Anaerobic dimethyl sulfoxide reductase chain B (dmsB), found in Haemophilus influenzae (strain ATCC 51907 / DSM 11121 / KW20 / Rd).